We begin with the raw amino-acid sequence, 247 residues long: MTTLFISDLHLDPARPAITELFLEFLRTQVPGSDALYILGDLFEAWIGDDTPSTAADAVAVALHAVADSGVPVFFMAGNRDFLVGETYAQRAGFRILPDPTVIDLYGHTTLLMHGDLLCTDDTAYQAFRAQTRDPVFQAQFLAQPLAARVAFAQQARAASQARHAELKQGDQSRFETVTDVSPAEVEATFVRYGLDRLIHGHTHRPAIHTLQAGGHTCTRIVLGDWYEQGSVLRVDADGASLEQLAL.

5 residues coordinate Mn(2+): Asp-8, His-10, Asp-41, Asn-79, and His-114. Substrate is bound at residue 79–80 (NR). Substrate is bound by residues Asp-122, Ser-160, Asp-171, Arg-174, and His-202. The Mn(2+) site is built by His-202 and His-204.

It belongs to the LpxH family. Mn(2+) is required as a cofactor.

The protein localises to the cell inner membrane. It catalyses the reaction UDP-2-N,3-O-bis[(3R)-3-hydroxytetradecanoyl]-alpha-D-glucosamine + H2O = 2-N,3-O-bis[(3R)-3-hydroxytetradecanoyl]-alpha-D-glucosaminyl 1-phosphate + UMP + 2 H(+). It participates in glycolipid biosynthesis; lipid IV(A) biosynthesis; lipid IV(A) from (3R)-3-hydroxytetradecanoyl-[acyl-carrier-protein] and UDP-N-acetyl-alpha-D-glucosamine: step 4/6. Functionally, hydrolyzes the pyrophosphate bond of UDP-2,3-diacylglucosamine to yield 2,3-diacylglucosamine 1-phosphate (lipid X) and UMP by catalyzing the attack of water at the alpha-P atom. Involved in the biosynthesis of lipid A, a phosphorylated glycolipid that anchors the lipopolysaccharide to the outer membrane of the cell. The polypeptide is UDP-2,3-diacylglucosamine hydrolase (Xanthomonas axonopodis pv. citri (strain 306)).